Consider the following 271-residue polypeptide: Indole-3-glycerol phosphate synthase (271 aa).

Belongs to the TrpC family.

The enzyme catalyses 1-(2-carboxyphenylamino)-1-deoxy-D-ribulose 5-phosphate + H(+) = (1S,2R)-1-C-(indol-3-yl)glycerol 3-phosphate + CO2 + H2O. Its pathway is amino-acid biosynthesis; L-tryptophan biosynthesis; L-tryptophan from chorismate: step 4/5. The chain is Indole-3-glycerol phosphate synthase from Lachnoclostridium phytofermentans (strain ATCC 700394 / DSM 18823 / ISDg) (Clostridium phytofermentans).